A 698-amino-acid polypeptide reads, in one-letter code: UvrABC system protein B (698 aa).

One can recognise a Helicase ATP-binding domain in the interval 28–414 (RRILAGERDV…SGGEFVEQVI (387 aa)). 41–48 (GATGTGKS) provides a ligand contact to ATP. The short motif at 94-117 (YYDYYQPEAYIAQTDTYIEKDSSI) is the Beta-hairpin element. One can recognise a Helicase C-terminal domain in the interval 432–598 (QIDDLIGEIR…PLRKKIADIL (167 aa)). Positions 609–629 (DTVQVGGSGRNVSRGRRAQSE) are disordered. A UVR domain is found at 653 to 688 (ADLIKDLTAQMMAAASDLQFELAARFRDEIADLKKE).

It belongs to the UvrB family. Forms a heterotetramer with UvrA during the search for lesions. Interacts with UvrC in an incision complex.

It localises to the cytoplasm. In terms of biological role, the UvrABC repair system catalyzes the recognition and processing of DNA lesions. A damage recognition complex composed of 2 UvrA and 2 UvrB subunits scans DNA for abnormalities. Upon binding of the UvrA(2)B(2) complex to a putative damaged site, the DNA wraps around one UvrB monomer. DNA wrap is dependent on ATP binding by UvrB and probably causes local melting of the DNA helix, facilitating insertion of UvrB beta-hairpin between the DNA strands. Then UvrB probes one DNA strand for the presence of a lesion. If a lesion is found the UvrA subunits dissociate and the UvrB-DNA preincision complex is formed. This complex is subsequently bound by UvrC and the second UvrB is released. If no lesion is found, the DNA wraps around the other UvrB subunit that will check the other stand for damage. The protein is UvrABC system protein B of Mycobacterium leprae (strain TN).